Here is a 414-residue protein sequence, read N- to C-terminus: Putative dipeptidase ARB_02715 (414 aa).

Residues 1–20 form the signal peptide; sequence MAALFVSLLALTSLVPVQGA. Residues histidine 45, aspartate 47, and glutamate 157 each contribute to the Zn(2+) site. Cysteine 96 and cysteine 186 are oxidised to a cystine. Histidine 184 provides a ligand contact to substrate. Residues histidine 228 and histidine 249 each coordinate Zn(2+). Positions 260 and 320 each coordinate substrate. Residue asparagine 392 is glycosylated (N-linked (GlcNAc...) asparagine).

It belongs to the metallo-dependent hydrolases superfamily. Peptidase M19 family. Zn(2+) is required as a cofactor.

It catalyses the reaction an L-aminoacyl-L-amino acid + H2O = 2 an L-alpha-amino acid. Its function is as follows. Hydrolyzes a wide range of dipeptides. This is Putative dipeptidase ARB_02715 from Arthroderma benhamiae (strain ATCC MYA-4681 / CBS 112371) (Trichophyton mentagrophytes).